Consider the following 308-residue polypeptide: tRNA dimethylallyltransferase (308 aa).

14–21 provides a ligand contact to ATP; sequence GPTASGKS. 16-21 contacts substrate; the sequence is TASGKS. An interaction with substrate tRNA region spans residues 39 to 42; that stretch reads DSMQ.

It belongs to the IPP transferase family. In terms of assembly, monomer. The cofactor is Mg(2+).

The enzyme catalyses adenosine(37) in tRNA + dimethylallyl diphosphate = N(6)-dimethylallyladenosine(37) in tRNA + diphosphate. Its function is as follows. Catalyzes the transfer of a dimethylallyl group onto the adenine at position 37 in tRNAs that read codons beginning with uridine, leading to the formation of N6-(dimethylallyl)adenosine (i(6)A). The protein is tRNA dimethylallyltransferase of Bradyrhizobium sp. (strain ORS 278).